We begin with the raw amino-acid sequence, 419 residues long: MNFRGNRMINNDPLFDLLNKEQQRQQHSLELIASENFASPAVLAAQGSVLTNKYAEGYYQHRYYGGCKFIDEVEMLAITRAQQLFGARYVNVQPHSGSQANQAVYLALLKPGDKILGMSLQCGGHLTHGSPVNQSGKWFNAFHYGVDAHSGLIDMDEVETIAKRERPRLIIAGGSAYPRHYDFARFRRIADAVGAMLLVDMAHFAGLVAGGCFPSPLAYADVITATTHKTLRGPRGGMILTNDARLAKKIDSAIFPGLQGGPLMHVIAAKAVALGEALQPEFKRYAGQVIENAQAMCQQLAQRGLTLLTGGTDCHLGIIDLRPQGLTGAQVEYFLELAGITVNKNTLLGDPQPPSITSGIRIGSAACATRGMKADDFTLIADWISEIIFAIKTPNIADICADIRQKVTKLTTNYPLPYQ.

(6S)-5,6,7,8-tetrahydrofolate contacts are provided by residues leucine 120 and 124–126 (GHL). Lysine 229 is modified (N6-(pyridoxal phosphate)lysine).

This sequence belongs to the SHMT family. Homodimer. It depends on pyridoxal 5'-phosphate as a cofactor.

The protein resides in the cytoplasm. The catalysed reaction is (6R)-5,10-methylene-5,6,7,8-tetrahydrofolate + glycine + H2O = (6S)-5,6,7,8-tetrahydrofolate + L-serine. Its pathway is one-carbon metabolism; tetrahydrofolate interconversion. The protein operates within amino-acid biosynthesis; glycine biosynthesis; glycine from L-serine: step 1/1. Functionally, catalyzes the reversible interconversion of serine and glycine with tetrahydrofolate (THF) serving as the one-carbon carrier. This reaction serves as the major source of one-carbon groups required for the biosynthesis of purines, thymidylate, methionine, and other important biomolecules. Also exhibits THF-independent aldolase activity toward beta-hydroxyamino acids, producing glycine and aldehydes, via a retro-aldol mechanism. In Salmonella typhi, this protein is Serine hydroxymethyltransferase 2.